The primary structure comprises 101 residues: Ubiquitin-related modifier 1 (101 aa).

Gly-101 carries the 1-thioglycine modification. Gly-101 participates in a covalent cross-link: Glycyl lysine isopeptide (Gly-Lys) (interchain with K-? in acceptor proteins).

It belongs to the URM1 family. C-terminal thiocarboxylation occurs in 2 steps, it is first acyl-adenylated (-COAMP) via the hesA/moeB/thiF part of UBA4, then thiocarboxylated (-COSH) via the rhodanese domain of UBA4.

It localises to the cytoplasm. The protein operates within tRNA modification; 5-methoxycarbonylmethyl-2-thiouridine-tRNA biosynthesis. In terms of biological role, acts as a sulfur carrier required for 2-thiolation of mcm(5)S(2)U at tRNA wobble positions of cytosolic tRNA(Lys), tRNA(Glu) and tRNA(Gln). Serves as sulfur donor in tRNA 2-thiolation reaction by being thiocarboxylated (-COSH) at its C-terminus by the MOCS3 homolog UBA4. The sulfur is then transferred to tRNA to form 2-thiolation of mcm(5)S(2)U. Prior mcm(5) tRNA modification by the elongator complex is required for 2-thiolation. Also acts as a ubiquitin-like protein (UBL) that is covalently conjugated via an isopeptide bond to lysine residues of target proteins such as AHP1. The thiocarboxylated form serves as substrate for conjugation and oxidative stress specifically induces the formation of UBL-protein conjugates. The polypeptide is Ubiquitin-related modifier 1 (Kluyveromyces lactis (strain ATCC 8585 / CBS 2359 / DSM 70799 / NBRC 1267 / NRRL Y-1140 / WM37) (Yeast)).